A 336-amino-acid polypeptide reads, in one-letter code: NmrA-like family domain-containing oxidoreductase malD (336 aa).

Residues 12–17 (GGTGNQ), 40–44 (RDPTS), 61–62 (DG), 82–84 (TNS), K140, and 163–166 (FMEA) each bind NADP(+).

It belongs to the NmrA-type oxidoreductase family.

Functionally, nmrA-like family domain-containing oxidoreductase; part of the gene cluster that mediates the biosynthesis of malbrancheamide, a dichlorinated fungal indole alkaloid that belongs to a family of natural products containing a characteristic bicyclo[2.2.2]diazaoctane core. The first step of malbrancheamide biosynthesis involves coupling of L-proline and L-tryptophan by malG, a bimodular NRPS, to produce L-Pro-L-Trp aldehyde through reductive offloading. This compound undergoes spontaneous cyclization and dehydration to give a dienamine which is reverse prenylated at C-2 by malE. The other prenyltransferase present in the cluster, malB, displays modest activity, suggesting that may be a redundant gene in the pathway. Subsequently, a [4+2] Diels-Alder cyclo-addition catalyzed by the bifunctional enzyme malC forms the characteristic bicyclo[2.2.2]diazaoctane ring of premalbrancheamid. Finally, the flavin-dependent halogenase malA catalyzes the iterative dichlorination of the indole ring of premalbrancheamide to yield C-9 monochlorinated malbrancheamide B, C-8 monochlorinated isomalbrancheamide B, and dichlorinated malbrancheamide. MalA is also able to brominate premalbrancheamide at C-9 to yield malbrancheamide C, and, to a lesser extend, at C-8 to yield isomalbrancheamide C. Finally, malA can brominate C-9 monochlorinated malbrancheamide B at C-8 to yield malbrancheamide D, or C-8 monochlorinated isomalbrancheamide B at C-9 to produce isomalbrancheamide D. In Malbranchea aurantiaca, this protein is NmrA-like family domain-containing oxidoreductase malD.